Consider the following 424-residue polypeptide: NuA4 complex subunit EAF3 homolog (424 aa).

Positions 23 to 73 (VDGERVLCFHGPLIYEAKVLKTKPDATPVEYYIHYAGWSKNWDEWVPENRV) constitute a Tudor-knot domain. The disordered stretch occupies residues 88-243 (ARQCGERSKK…STPTTEPAPC (156 aa)). The span at 97-106 (KDNKKGSAKA) shows a compositional bias: basic residues. Positions 107-116 (KKMEQMRNES) are enriched in basic and acidic residues. Ser-119 carries the post-translational modification Phosphoserine. A compositionally biased stretch (low complexity) spans 122 to 165 (SKDSNTSQSTASSTPTTSAGPGSKSEAGSTGTTTTNSTANSTTS). 4 positions are modified to phosphothreonine: Thr-175, Thr-183, Thr-196, and Thr-197. At Ser-211 the chain carries Phosphoserine. Positions 232–242 (TPSTPTTEPAP) are enriched in low complexity. Residue Thr-235 is modified to Phosphothreonine. Positions 252 to 424 (AKVEVKIKIP…VDPEYVRNAQ (173 aa)) constitute an MRG domain.

As to quaternary structure, component of the Tip60 chromatin-remodeling complex which contains the catalytic subunit Tip60 and the subunits Domino, Tra1, Brd8, E(Pc), DMAP1, Pontin, Reptin, Ing3, Act87E, BAP55, Mrg15, MrgBP, Gas41 and YL-1.

The protein localises to the nucleus. In terms of biological role, part of the Tip60 chromatin-remodeling complex which is involved in DNA repair. Upon induction of DNA double-strand breaks, this complex acetylates phosphorylated H2AV in nucleosomes and exchanges it with unmodified H2AV. The chain is NuA4 complex subunit EAF3 homolog (MRG15) from Drosophila melanogaster (Fruit fly).